We begin with the raw amino-acid sequence, 246 residues long: C-X-C motif chemokine 16 (246 aa).

An N-terminal signal peptide occupies residues Met-1–Gly-26. Topologically, residues Asn-27–Trp-201 are extracellular. Cystine bridges form between Cys-35–Cys-65 and Cys-37–Cys-79. Disordered regions lie at residues Gly-104 to Leu-150 and Pro-175 to Thr-198. The span at Pro-128 to Pro-146 shows a compositional bias: polar residues. Basic and acidic residues predominate over residues Pro-175–Gln-189. Residues Val-202–Leu-222 traverse the membrane as a helical segment. Residues Cys-223–Pro-246 lie on the Cytoplasmic side of the membrane.

This sequence belongs to the intercrine alpha (chemokine CxC) family. Post-translationally, glycosylated. As to expression, widely expressed. Not detected in purified B- and T-cells.

The protein localises to the membrane. Induces a strong chemotactic response. Induces calcium mobilization. Binds to CXCR6/Bonzo. Also acts as a scavenger receptor on macrophages, which specifically binds to OxLDL (oxidized low density lipoprotein), suggesting that it may be involved in pathophysiology such as atherogenesis. This Mus musculus (Mouse) protein is C-X-C motif chemokine 16 (Cxcl16).